We begin with the raw amino-acid sequence, 348 residues long: Acetylesterase (348 aa).

Positions 1-16 (MRSILVIPSFVAVLNA) are cleaved as a signal peptide. 5 N-linked (GlcNAc...) asparagine glycosylation sites follow: N64, N165, N218, N223, and N297.

Belongs to the carbohydrate esterase CE16 family. In terms of processing, N-glycosylated.

The protein localises to the secreted. It catalyses the reaction an acetyl ester + H2O = an aliphatic alcohol + acetate + H(+). Acetylesterase that acts as an exo-deacetylase. Shows activity towards naphtyl acetate, triacetin, as well as towards glucose- and xylose acetates. Liberates acetic acid from xylo-oligomers. The protein is Acetylesterase of Hypocrea jecorina (Trichoderma reesei).